The chain runs to 340 residues: Guanine nucleotide-binding protein G(I)/G(S)/G(T) subunit beta-1 (340 aa).

The residue at position 2 (S2) is an N-acetylserine. Residue S2 is modified to Phosphoserine. WD repeat units follow at residues 46-94 (RTRR…HAIP), 95-140 (LRSS…RELA), 141-181 (GHTG…TTFT), 182-223 (GHTG…QTFT), 224-267 (GHES…YSHD), 268-309 (NIIC…GVLA), and 310-340 (GHDNRVSCLGVTDDGMAVATGSWDSFLKIWN). H266 is modified (phosphohistidine).

Belongs to the WD repeat G protein beta family. G proteins are composed of 3 units, alpha, beta and gamma. The heterodimer formed by GNB1 and GNG2 interacts with ARHGEF5. The heterodimer formed by GNB1 and GNG2 interacts with GRK2. Forms a complex with GNAO1 and GNG3. Interacts with ARHGEF18 and RASD2. Forms complexes with TAS2R14 and G-proteins; these complexes play a role in the perception of bitterness. Component of the TAS2R14-GNAI1 complex, consisting of TAS2R14, GNAI1, GNB1 and GNG2. Component of the TAS2R14-GNAT3 complex, consisting of TAS2R14, GNAT3, GNB1 and GNG2. Component of the TAS2R14-GNAS2 complex, consisting of TAS2R14, GNAS2, GNB1 and GNG2. In terms of processing, phosphorylation at His-266 by NDKB contributes to G protein activation by increasing the high energetic phosphate transfer onto GDP.

Guanine nucleotide-binding proteins (G proteins) are involved as a modulator or transducer in various transmembrane signaling systems. The beta and gamma chains are required for the GTPase activity, for replacement of GDP by GTP, and for G protein-effector interaction. This chain is Guanine nucleotide-binding protein G(I)/G(S)/G(T) subunit beta-1 (GNB1), found in Bos taurus (Bovine).